Here is a 360-residue protein sequence, read N- to C-terminus: S-adenosylmethionine:tRNA ribosyltransferase-isomerase (360 aa).

Belongs to the QueA family. As to quaternary structure, monomer.

The protein localises to the cytoplasm. The enzyme catalyses 7-aminomethyl-7-carbaguanosine(34) in tRNA + S-adenosyl-L-methionine = epoxyqueuosine(34) in tRNA + adenine + L-methionine + 2 H(+). It functions in the pathway tRNA modification; tRNA-queuosine biosynthesis. Its function is as follows. Transfers and isomerizes the ribose moiety from AdoMet to the 7-aminomethyl group of 7-deazaguanine (preQ1-tRNA) to give epoxyqueuosine (oQ-tRNA). The polypeptide is S-adenosylmethionine:tRNA ribosyltransferase-isomerase (Rhizobium rhizogenes (strain K84 / ATCC BAA-868) (Agrobacterium radiobacter)).